Reading from the N-terminus, the 551-residue chain is BAG family molecular chaperone regulator 8, chloroplastic (551 aa).

Over residues 1-19 (MASHHHHNHNHVCSRHQNH) the composition is skewed to basic residues. A disordered region spans residues 1 to 46 (MASHHHHNHNHVCSRHQNHHNNTPQFATSPNCCNKSNHPSPPPAED). The N-terminal 52 residues, 1-52 (MASHHHHNHNHVCSRHQNHHNNTPQFATSPNCCNKSNHPSPPPAEDNLLHLV), are a transit peptide targeting the chloroplast. Positions 20 to 38 (HNNTPQFATSPNCCNKSNH) are enriched in polar residues. Residues 131–160 (RDSAARVIQTHFRSYLVHRSISFRQLKELA) form the IQ domain. The region spanning 147–228 (VHRSISFRQL…RFVQYVDDCV (82 aa)) is the BAG domain. Positions 246–281 (GKKPQGFGTSSEDEDNNADMSDDSEEVPVSSIDKRK) are disordered. Over residues 256–271 (SEDEDNNADMSDDSEE) the composition is skewed to acidic residues. Ser-332 is subject to Phosphoserine. 2 disordered regions span residues 414–433 (DEGK…KGSG) and 450–551 (NVYK…KMEP). The span at 479-499 (GEEKGNVNEVEEIKYVPKENE) shows a compositional bias: basic and acidic residues. Residues 500–513 (SFEEEEEKETDSEN) are compositionally biased toward acidic residues. Basic and acidic residues predominate over residues 522-534 (EGDKRVTKKEVQH).

Binds to the ATPase domain of HSP70/HSC70 chaperones.

It localises to the plastid. Its subcellular location is the chloroplast. Functionally, co-chaperone that regulates diverse cellular pathways, such as programmed cell death and stress responses. The sequence is that of BAG family molecular chaperone regulator 8, chloroplastic (BAG1) from Arabidopsis thaliana (Mouse-ear cress).